Consider the following 281-residue polypeptide: Pantothenate synthetase (281 aa).

An ATP-binding site is contributed by 30–37; the sequence is MGYLHEGH. The Proton donor role is filled by His-37. (R)-pantoate is bound at residue Gln-61. Gln-61 contributes to the beta-alanine binding site. Residue 147-150 coordinates ATP; that stretch reads GEKD. Gln-153 provides a ligand contact to (R)-pantoate. ATP contacts are provided by residues Ile-176 and 184–187; that span reads KSSR.

Belongs to the pantothenate synthetase family. In terms of assembly, homodimer.

It localises to the cytoplasm. The enzyme catalyses (R)-pantoate + beta-alanine + ATP = (R)-pantothenate + AMP + diphosphate + H(+). Its pathway is cofactor biosynthesis; (R)-pantothenate biosynthesis; (R)-pantothenate from (R)-pantoate and beta-alanine: step 1/1. In terms of biological role, catalyzes the condensation of pantoate with beta-alanine in an ATP-dependent reaction via a pantoyl-adenylate intermediate. The polypeptide is Pantothenate synthetase (Clostridium botulinum (strain ATCC 19397 / Type A)).